The chain runs to 353 residues: A-kinase anchor protein 7 isoforms delta and gamma (353 aa).

Composition is skewed to basic and acidic residues over residues 1–22 and 66–76; these read MERP…RGEE and RSKENRGDRND. Disordered stretches follow at residues 1–33 and 47–85; these read MERP…SPVG and DDCG…KKAK. Residues T134 and 224 to 226 each bind AMP; that span reads HLT. Residues T134 and 224–226 contribute to the CMP site; that span reads HLT. Positions 299-353 are PKA-RII-alpha subunit binding domain; sequence AELVRLSKRLVENAVLKAVQQYLEETQNKKQPGEGNSVKAEEGDRNGDGSDNNRK. Residues 300–324 are RI-alpha-binding; that stretch reads ELVRLSKRLVENAVLKAVQQYLEET. Residues 301 to 314 form an RII-binding region; it reads LVRLSKRLVENAVL. The disordered stretch occupies residues 321–353; it reads LEETQNKKQPGEGNSVKAEEGDRNGDGSDNNRK. A compositionally biased stretch (basic and acidic residues) spans 337–353; the sequence is KAEEGDRNGDGSDNNRK.

In terms of assembly, binds cAMP-dependent protein kinase (PKA). Interacts with PRKCA; only the cytoplasmic form is capable of interacting with PRKCA. In terms of tissue distribution, expressed highly in the heart, and moderately in brain, lung, liver, kidney and testis. Hardly detectable in spleen and skeletal muscle. In kidney, isoform Delta is expressed in the principal cells of the IMCD.

The protein resides in the nucleus. It localises to the cytoplasm. The protein localises to the cell membrane. Probably targets cAMP-dependent protein kinase (PKA) to the cellular membrane or cytoskeletal structures. The membrane-associated form reduces epithelial sodium channel (ENaC) activity, whereas the free cytoplasmic form may negatively regulate ENaC channel feedback inhibition by intracellular sodium. Isoform Delta may be involved in shuttling aquaporin-2 (AQP2) to the plasma membrane. The polypeptide is A-kinase anchor protein 7 isoforms delta and gamma (Rattus norvegicus (Rat)).